Here is an 80-residue protein sequence, read N- to C-terminus: Inner kinetochore subunit MHF2 (80 aa).

The protein belongs to the CENP-X/MHF2 family. The MHF histone-fold complex is a heterotetramer of 2 MHF1-MHF2 heterodimers. Together with MPH1/FANCM, forms the FANCM-MHF complex. Component of the inner kinetochore constitutive centromere-associated network (CCAN) (also known as central kinetochore CTF19 complex in yeast), which is composed of at least AME1, CHL4, CNN1, CTF3, CTF19, IML3, MCM16, MCM21, MCM22, MHF1, MHF2, MIF2, NKP1, NKP2, OKP1 and WIP1.

DNA-binding component of a FANCM-MHF complex involved in DNA damage repair and genome maintenance. FANCM-MHF promotes gene conversion at blocked replication forks, probably by reversal of the stalled fork. Component of the kinetochore, a multiprotein complex that assembles on centromeric DNA and attaches chromosomes to spindle microtubules, mediating chromosome segregation and sister chromatid segregation during meiosis and mitosis. Component of the inner kinetochore constitutive centromere-associated network (CCAN), which serves as a structural platform for outer kinetochore assembly. The polypeptide is Inner kinetochore subunit MHF2 (Saccharomyces cerevisiae (strain ATCC 204508 / S288c) (Baker's yeast)).